We begin with the raw amino-acid sequence, 258 residues long: MTQHSRDTPQFYLTAPSPCPYLPGRHERKVFTHLVGNKAGELNDLLTHGGFRRSQSIAYRPACDQCRACVSVRVIANEFKPSRNQRKLLARNADIVGEQRNPVPTSEQYSVFRAYLDQRHRHGGMADMTVLDYAMMVEDSHVQTRMIEYRKRTPDTGITGRGGELIAAALTDVLGDGLSMVYSFYEPNEQHRSLGTFMILDHIARARRLGLPYVYLGYWIEGSKKMDYKGRYLPQQRLAPSGWLRIDASGEMQPEPQD.

This sequence belongs to the R-transferase family. Bpt subfamily.

The protein localises to the cytoplasm. It catalyses the reaction N-terminal L-glutamyl-[protein] + L-leucyl-tRNA(Leu) = N-terminal L-leucyl-L-glutamyl-[protein] + tRNA(Leu) + H(+). The enzyme catalyses N-terminal L-aspartyl-[protein] + L-leucyl-tRNA(Leu) = N-terminal L-leucyl-L-aspartyl-[protein] + tRNA(Leu) + H(+). Functionally, functions in the N-end rule pathway of protein degradation where it conjugates Leu from its aminoacyl-tRNA to the N-termini of proteins containing an N-terminal aspartate or glutamate. The protein is Aspartate/glutamate leucyltransferase of Rhodopseudomonas palustris (strain TIE-1).